Reading from the N-terminus, the 148-residue chain is Receptor activity-modifying protein 3 (148 aa).

The signal sequence occupies residues 1 to 23 (METGALRRPQLLPLLLLLCGGCP). Over 24–113 (RAGGCNETGM…CTVDRVHLED (90 aa)) the chain is Extracellular. N-linked (GlcNAc...) asparagine glycosylation is found at Asn29, Asn58, Asn71, and Asn103. Disulfide bonds link Cys40/Cys72 and Cys57/Cys104. The helical transmembrane segment at 114–138 (PPDEVLIPLIVIPVVLTVAMAGLVV) threads the bilayer. Topologically, residues 139–148 (WRSKRTDTLL) are cytoplasmic.

Belongs to the RAMP family. As to quaternary structure, heterodimer of CALCRL and RAMP3; interaction induces allosteric modulation of CALCRL function and ligand specificity for adrenomedullin/ADM and intermedin/ADM2. Heterodimer of CALCR and RAMP3; interaction form the receptor complex AMYR3 for amylin/IAPP. Interacts with GPER1. In terms of tissue distribution, strongly expressed in lung, breast, immune system and fetal tissues.

The protein resides in the cell membrane. The protein localises to the membrane. Functionally, accessory protein that interacts with and modulates the function of G-protein coupled receptors including calcitonin gene-related peptide type 1 receptor (CALCRL), calcitonin receptor (CALCR) and G-protein coupled estrogen receptor 1 (GPER1). Required for the transport of CALCRL and GPER1 receptors to the plasma membrane. Plays a role in cardioprotection by reducing cardiac hypertrophy and perivascular fibrosis in a GPER1-dependent manner. Together with CALCRL, form a receptor complex for adrenomedullin/ADM and intermedin/ADM2. Together with CALCR, act as a receptor complex for amylin/IAPP. This chain is Receptor activity-modifying protein 3, found in Homo sapiens (Human).